A 284-amino-acid chain; its full sequence is uncharacterized protein (284 aa).

The segment at 37–65 adopts a C3H1-type zinc-finger fold; the sequence is NEKKLICFSIINGENCIYGPNCTYAHSLS.

This is an uncharacterized protein from Acanthamoeba polyphaga (Amoeba).